The following is a 114-amino-acid chain: T cell receptor beta variable 25-1 (114 aa).

Positions Met1–Ala21 are cleaved as a signal peptide. The Ig-like domain occupies Asp22 to Glu114. The cysteines at positions 42 and 110 are disulfide-linked. N-linked (GlcNAc...) asparagine glycosylation occurs at Asn72.

As to quaternary structure, alpha-beta TR is a heterodimer composed of an alpha and beta chain; disulfide-linked. The alpha-beta TR is associated with the transmembrane signaling CD3 coreceptor proteins to form the TR-CD3 (TcR or TCR). The assembly of alpha-beta TR heterodimers with CD3 occurs in the endoplasmic reticulum where a single alpha-beta TR heterodimer associates with one CD3D-CD3E heterodimer, one CD3G-CD3E heterodimer and one CD247 homodimer forming a stable octameric structure. CD3D-CD3E and CD3G-CD3E heterodimers preferentially associate with TR alpha and TR beta chains, respectively. The association of the CD247 homodimer is the last step of TcR assembly in the endoplasmic reticulum and is required for transport to the cell surface.

It is found in the cell membrane. Its function is as follows. V region of the variable domain of T cell receptor (TR) beta chain that participates in the antigen recognition. Alpha-beta T cell receptors are antigen specific receptors which are essential to the immune response and are present on the cell surface of T lymphocytes. Recognize peptide-major histocompatibility (MH) (pMH) complexes that are displayed by antigen presenting cells (APC), a prerequisite for efficient T cell adaptive immunity against pathogens. Binding of alpha-beta TR to pMH complex initiates TR-CD3 clustering on the cell surface and intracellular activation of LCK that phosphorylates the ITAM motifs of CD3G, CD3D, CD3E and CD247 enabling the recruitment of ZAP70. In turn ZAP70 phosphorylates LAT, which recruits numerous signaling molecules to form the LAT signalosome. The LAT signalosome propagates signal branching to three major signaling pathways, the calcium, the mitogen-activated protein kinase (MAPK) kinase and the nuclear factor NF-kappa-B (NF-kB) pathways, leading to the mobilization of transcription factors that are critical for gene expression and essential for T cell growth and differentiation. The T cell repertoire is generated in the thymus, by V-(D)-J rearrangement. This repertoire is then shaped by intrathymic selection events to generate a peripheral T cell pool of self-MH restricted, non-autoaggressive T cells. Post-thymic interaction of alpha-beta TR with the pMH complexes shapes TR structural and functional avidity. The chain is T cell receptor beta variable 25-1 from Homo sapiens (Human).